The chain runs to 177 residues: Large ribosomal subunit protein uL6 (177 aa).

The protein belongs to the universal ribosomal protein uL6 family. Part of the 50S ribosomal subunit.

This protein binds to the 23S rRNA, and is important in its secondary structure. It is located near the subunit interface in the base of the L7/L12 stalk, and near the tRNA binding site of the peptidyltransferase center. The chain is Large ribosomal subunit protein uL6 from Shewanella denitrificans (strain OS217 / ATCC BAA-1090 / DSM 15013).